The following is a 156-amino-acid chain: Small ribosomal subunit protein uS7 (156 aa).

This sequence belongs to the universal ribosomal protein uS7 family. In terms of assembly, part of the 30S ribosomal subunit. Contacts proteins S9 and S11.

Functionally, one of the primary rRNA binding proteins, it binds directly to 16S rRNA where it nucleates assembly of the head domain of the 30S subunit. Is located at the subunit interface close to the decoding center, probably blocks exit of the E-site tRNA. The sequence is that of Small ribosomal subunit protein uS7 from Vibrio cholerae serotype O1 (strain ATCC 39315 / El Tor Inaba N16961).